The sequence spans 542 residues: Chaperonin GroEL 1 (542 aa).

Residues 29–32 (TLGP), 86–90 (DGTTT), Gly-413, 477–479 (NAA), and Asp-493 each bind ATP.

The protein belongs to the chaperonin (HSP60) family. Forms a cylinder of 14 subunits composed of two heptameric rings stacked back-to-back. Interacts with the co-chaperonin GroES.

The protein resides in the cytoplasm. It carries out the reaction ATP + H2O + a folded polypeptide = ADP + phosphate + an unfolded polypeptide.. Functionally, together with its co-chaperonin GroES, plays an essential role in assisting protein folding. The GroEL-GroES system forms a nano-cage that allows encapsulation of the non-native substrate proteins and provides a physical environment optimized to promote and accelerate protein folding. This chain is Chaperonin GroEL 1, found in Renibacterium salmoninarum (strain ATCC 33209 / DSM 20767 / JCM 11484 / NBRC 15589 / NCIMB 2235).